The following is a 367-amino-acid chain: Chorismate synthase (367 aa).

2 residues coordinate NADP(+): Arg48 and Arg54. FMN is bound by residues 125 to 127, 238 to 239, Gly278, 293 to 297, and Arg319; these read RSS, NA, and KPTSS.

Belongs to the chorismate synthase family. As to quaternary structure, homotetramer. The cofactor is FMNH2.

The enzyme catalyses 5-O-(1-carboxyvinyl)-3-phosphoshikimate = chorismate + phosphate. Its pathway is metabolic intermediate biosynthesis; chorismate biosynthesis; chorismate from D-erythrose 4-phosphate and phosphoenolpyruvate: step 7/7. Functionally, catalyzes the anti-1,4-elimination of the C-3 phosphate and the C-6 proR hydrogen from 5-enolpyruvylshikimate-3-phosphate (EPSP) to yield chorismate, which is the branch point compound that serves as the starting substrate for the three terminal pathways of aromatic amino acid biosynthesis. This reaction introduces a second double bond into the aromatic ring system. In Xanthomonas campestris pv. campestris (strain B100), this protein is Chorismate synthase.